Here is a 406-residue protein sequence, read N- to C-terminus: Gustatory receptor for sugar taste 64b (406 aa).

The Cytoplasmic portion of the chain corresponds to 1 to 47 (MPQGETFHRAVSNVLFISQIYGLLPVSNVRALDVADIRFRWCSPRIL). The helical transmembrane segment at 48–68 (YSLLIGILNLSEFGAVINYVI) threads the bilayer. Residues 69-79 (KVTINFHTSST) are Extracellular-facing. Residues 80–100 (LSLYIVCLLEHLFFWRLAIQW) traverse the membrane as a helical segment. Residues 101 to 130 (PRIMRTWHGVEQLFLRVPYRFYGEYRIKRR) are Cytoplasmic-facing. The helical transmembrane segment at 131 to 151 (IYIVFTIVMSSALVEHCLLLG) threads the bilayer. The Extracellular segment spans residues 152–183 (NSFHLSNMERTQCKINVTYFESIYKWERPHLY). An N-linked (GlcNAc...) asparagine glycan is attached at asparagine 167. The chain crosses the membrane as a helical span at residues 184-204 (MILPYHFWMLPILEWVNQTIA). Residues 205–265 (YPRSFTDCFI…KRLVHLLDAA (61 aa)) lie on the Cytoplasmic side of the membrane. The chain crosses the membrane as a helical span at residues 266–286 (IAPLVLLAFGNNMSFICFQLF). The Extracellular portion of the chain corresponds to 287–290 (NSFK). A helical transmembrane segment spans residues 291–311 (NIGVDFLVMLAFWYSLGFAVV). The Cytoplasmic segment spans residues 312–370 (RTLLTIFVASSINDYERKIVTALRDVPSRAWSIEVQRFSEQLGNDTTALSGSGFFYLTR). A helical membrane pass occupies residues 371–391 (SLVLAMGTTIITYELMISDVI). Topologically, residues 392 to 406 (NQGSIRQKTQYCREY) are extracellular.

It belongs to the insect chemoreceptor superfamily. Gustatory receptor (GR) family. Gr5a subfamily. In terms of tissue distribution, expressed in Gr5a-expressing sugar-sensing cells.

It localises to the cell membrane. Its function is as follows. One of the few identified sugar gustatory receptors identified so far and which promotes the starvation-induced increase of feeding motivation. The polypeptide is Gustatory receptor for sugar taste 64b (Gr64b) (Drosophila melanogaster (Fruit fly)).